The following is a 311-amino-acid chain: Methionyl-tRNA formyltransferase (311 aa).

Residue 110–113 (SLLP) coordinates (6S)-5,6,7,8-tetrahydrofolate.

This sequence belongs to the Fmt family.

It catalyses the reaction L-methionyl-tRNA(fMet) + (6R)-10-formyltetrahydrofolate = N-formyl-L-methionyl-tRNA(fMet) + (6S)-5,6,7,8-tetrahydrofolate + H(+). In terms of biological role, attaches a formyl group to the free amino group of methionyl-tRNA(fMet). The formyl group appears to play a dual role in the initiator identity of N-formylmethionyl-tRNA by promoting its recognition by IF2 and preventing the misappropriation of this tRNA by the elongation apparatus. This chain is Methionyl-tRNA formyltransferase, found in Streptococcus pyogenes serotype M12 (strain MGAS2096).